The following is a 543-amino-acid chain: MSSAAAVADVIEAFKQRGFEFVGKTDDGWFRLHGRLTPPQADKGCPCEVQLDPTFFNLPRIRLLEIPPELPAAVPHLGADGGLCYLAKGTVVLDIYDPVGQSLACLQRAAVVFGQIMQGEMIEDLAEEFFAYWHGWHCFVDMQGEDLGRQNCIVAHANGCPLWFITDNEDRTTEKLKSLGYQVTDRTVLTYRVKTGAQPRPLTSNWPPETVGDILAWQSTLDPRCRRKIHERIKEGERKKANGVLIVIESPLMTYGFAVLYDRQSLVQKSKLIDRRDSSYGLKVMPISVVRIDDRYLAQRNMPNSKTLAGKNIAVVGCGTIGGYLSDMLVKAGAGTCGGKLTLVDFDCLLPQNIGRHRLGFPDLLSNKAEAMAKELKRLAPGAEIRALPVDVRHAQLGELDLLIDATGEESLGHWLCGHYPPPTPMLSVWIEGPGTAVRALLRTKASDACYRCLWHSNRRGEFRSITDPLPAILAGHGCEGLYVPFPASVSVHAASLGAEMTLDWVNGVYTPALRTRLIDRAQQLATPDCDPPRDRECPLCNS.

Residues 1–159 (MSSAAAVADV…QNCIVAHANG (159 aa)) are E2-like domain. Cys84 (for E2-like domain) is an active-site residue. The linker domain stretch occupies residues 160–305 (CPLWFITDNE…YLAQRNMPNS (146 aa)). The segment at 306 to 543 (KTLAGKNIAV…RDRECPLCNS (238 aa)) is adenylation plus E1-like domain. Residues Cys450 and Cys453 each act as for E1-like domain in the active site.

It in the C-terminal section; belongs to the HesA/MoeB/ThiF family. In terms of assembly, forms a Cap2-CdnA complex. A Cap2 dimer is bound on either side by a CdnA monomer.

CD-NTase priming component of a CBASS antiviral system. CBASS (cyclic oligonucleotide-based antiphage signaling system) provides immunity against bacteriophages. The CD-NTase protein (CdnA) synthesizes cyclic nucleotides in response to infection; these serve as specific second messenger signals. The signals activate a diverse range of effectors, leading to bacterial cell death and thus abortive phage infection. A type II-A(GA) CBASS system. Its function is as follows. Acts as a protein transferase, conjugating CdnA, the CD-NTase, to unidentified target(s) in the cell probably via an E1-E2 ubiquitin transferase-like mechanism. This primes CdnA, upon phage infection CdnA activates and makes cyclic nucleotides. Protein conjugation requires ATP. In terms of biological role, the capV-cdnA-cap2-cap3 operon provides about 10(4)-fold protection in strain BWHPSA011 against infection by phage PaMx41. In P.aeruginosa strain PAO1 it confers protection against phages PaMx41 and JBD18 but not JBD67 (JBD18 and JBD67 do not replicate in BWHPSA011 / Pa011). When acb2 in JBD67 is deleted this CBASS operon then protects against JDB67 also. This CBASS system limits prophage induction of lysogenized JBD67 as well as viral lytic replication. The protein is ATP-dependent ubiquitin transferase-like protein Cap2 of Pseudomonas aeruginosa (strain BWHPSA011 / Pa011).